A 624-amino-acid chain; its full sequence is Phosphatidylinositol 4-kinase lsb6 (624 aa).

A compositionally biased stretch (polar residues) spans 1–31; that stretch reads MESTFHSDTLDSFPNYQENSLNTNEEQTNPL. Residues 1–53 form a disordered region; that stretch reads MESTFHSDTLDSFPNYQENSLNTNEEQTNPLESLRDGWASSNSSSSSSLLLPD. Over residues 40–51 the composition is skewed to low complexity; that stretch reads SSNSSSSSSLLL. Residues 145-520 form the PI3K/PI4K catalytic domain; it reads GVFPVLISKG…LLELPNLYVV (376 aa). A G-loop region spans residues 151 to 157; that stretch reads ISKGSSG. The segment at 346–354 is catalytic loop; the sequence is RNTDRNLDN. Residues 409-429 form an activation loop region; it reads AIDNSLAFPYKHPDSWRSFPY.

It belongs to the PI3/PI4-kinase family. Requires Mg(2+) as cofactor. It depends on Mn(2+) as a cofactor.

Its subcellular location is the cell membrane. The protein resides in the vacuole membrane. It is found in the golgi apparatus membrane. It carries out the reaction a 1,2-diacyl-sn-glycero-3-phospho-(1D-myo-inositol) + ATP = a 1,2-diacyl-sn-glycero-3-phospho-(1D-myo-inositol 4-phosphate) + ADP + H(+). In terms of biological role, may play a role in endocytic and/or exocytic pathways. The chain is Phosphatidylinositol 4-kinase lsb6 (lsb6) from Schizosaccharomyces pombe (strain 972 / ATCC 24843) (Fission yeast).